Consider the following 470-residue polypeptide: Uronate isomerase (470 aa).

Belongs to the metallo-dependent hydrolases superfamily. Uronate isomerase family.

The enzyme catalyses D-glucuronate = D-fructuronate. It catalyses the reaction aldehydo-D-galacturonate = keto-D-tagaturonate. It functions in the pathway carbohydrate metabolism; pentose and glucuronate interconversion. This Escherichia coli O8 (strain IAI1) protein is Uronate isomerase.